A 378-amino-acid chain; its full sequence is Probable pectin lyase C (378 aa).

The first 18 residues, 1 to 18 (MKVPFLQLLCLNAALASA), serve as a signal peptide directing secretion. Intrachain disulfides connect cysteine 81/cysteine 100 and cysteine 90/cysteine 220. Asparagine 123 carries an N-linked (GlcNAc...) asparagine glycan. The active site involves arginine 250. An intrachain disulfide couples cysteine 316 to cysteine 324.

Belongs to the polysaccharide lyase 1 family.

The protein resides in the secreted. The enzyme catalyses Eliminative cleavage of (1-&gt;4)-alpha-D-galacturonan methyl ester to give oligosaccharides with 4-deoxy-6-O-methyl-alpha-D-galact-4-enuronosyl groups at their non-reducing ends.. Pectinolytic enzymes consist of four classes of enzymes: pectin lyase, polygalacturonase, pectin methylesterase and rhamnogalacturonase. Among pectinolytic enzymes, pectin lyase is the most important in depolymerization of pectin, since it cleaves internal glycosidic bonds of highly methylated pectins. The protein is Probable pectin lyase C (pelC) of Aspergillus niger.